A 205-amino-acid polypeptide reads, in one-letter code: Protein N-terminal glutamine amidohydrolase (205 aa).

Residues cysteine 20, histidine 74, and aspartate 90 contribute to the active site.

Belongs to the NTAQ1 family. In terms of assembly, monomer.

The enzyme catalyses N-terminal L-glutaminyl-[protein] + H2O = N-terminal L-glutamyl-[protein] + NH4(+). Its function is as follows. Mediates the side-chain deamidation of N-terminal glutamine residues to glutamate, an important step in N-end rule pathway of protein degradation. Conversion of the resulting N-terminal glutamine to glutamate renders the protein susceptible to arginylation, polyubiquitination and degradation as specified by the N-end rule. Does not act on substrates with internal or C-terminal glutamine and does not act on non-glutamine residues in any position. In Drosophila melanogaster (Fruit fly), this protein is Protein N-terminal glutamine amidohydrolase (tun).